Reading from the N-terminus, the 180-residue chain is Oligoribonuclease (180 aa).

One can recognise an Exonuclease domain in the interval 7 to 170; the sequence is LIWIDLEMTG…DDIRESIAEL (164 aa). The active site involves Y128.

The protein belongs to the oligoribonuclease family.

The protein localises to the cytoplasm. 3'-to-5' exoribonuclease specific for small oligoribonucleotides. The sequence is that of Oligoribonuclease from Pseudomonas fluorescens (strain Pf0-1).